Here is a 471-residue protein sequence, read N- to C-terminus: Tryptophanase (471 aa).

An N6-(pyridoxal phosphate)lysine modification is found at lysine 256.

This sequence belongs to the beta-eliminating lyase family. As to quaternary structure, homotetramer. Requires pyridoxal 5'-phosphate as cofactor.

The catalysed reaction is L-tryptophan + H2O = indole + pyruvate + NH4(+). It participates in amino-acid degradation; L-tryptophan degradation via pyruvate pathway; indole and pyruvate from L-tryptophan: step 1/1. The chain is Tryptophanase from Salinibacter ruber (strain DSM 13855 / M31).